A 265-amino-acid chain; its full sequence is Phosphate import ATP-binding protein PstB (265 aa).

One can recognise an ABC transporter domain in the interval 18 to 260 (MECRDCHVYY…PEDPRTESYI (243 aa)). Residue 50–57 (GPSGCGKS) participates in ATP binding.

This sequence belongs to the ABC transporter superfamily. Phosphate importer (TC 3.A.1.7) family. In terms of assembly, the complex is composed of two ATP-binding proteins (PstB), two transmembrane proteins (PstC and PstA) and a solute-binding protein (PstS).

The protein resides in the cell inner membrane. The catalysed reaction is phosphate(out) + ATP + H2O = ADP + 2 phosphate(in) + H(+). Functionally, part of the ABC transporter complex PstSACB involved in phosphate import. Responsible for energy coupling to the transport system. This is Phosphate import ATP-binding protein PstB from Ruegeria pomeroyi (strain ATCC 700808 / DSM 15171 / DSS-3) (Silicibacter pomeroyi).